Here is a 420-residue protein sequence, read N- to C-terminus: Serine palmitoyltransferase (420 aa).

Residues 134–135, histidine 234, threonine 262, and serine 264 contribute to the pyridoxal 5'-phosphate site; that span reads GY. Lysine 265 carries the post-translational modification N6-(pyridoxal phosphate)lysine.

It belongs to the class-II pyridoxal-phosphate-dependent aminotransferase family. As to quaternary structure, homodimer. The cofactor is pyridoxal 5'-phosphate.

The protein localises to the cytoplasm. It carries out the reaction L-serine + hexadecanoyl-CoA + H(+) = 3-oxosphinganine + CO2 + CoA. It functions in the pathway lipid metabolism; sphingolipid metabolism. Not inhibited by relatively high concentrations of palmitoyl-CoA. Inhibited by both D-cycloserine (DCS) and L-cycloserine (LCS), which inactivate SPT by transamination to form a free pyridoxamine 5'-phosphate (PMP) and beta-aminooxyacetaldehyde that remain bound at the active site. Inhibition is reversed by incubation with excess pyridoxal phosphate. Inhibited by the fungal natural product myriocin, which acts as a competitive inhibitor for both L-serine and palmitoyl-CoA substrates. In terms of biological role, catalyzes the condensation of L-serine with palmitoyl-CoA (hexadecanoyl-CoA) to produce 3-oxosphinganine. Exhibits a broad substrate specificity concerning the chain length and the degree of unsaturation of acyl-CoA. The chain is Serine palmitoyltransferase from Sphingomonas paucimobilis (Pseudomonas paucimobilis).